The sequence spans 223 residues: Uracil-DNA glycosylase (223 aa).

The Proton acceptor role is filled by Asp67.

Belongs to the uracil-DNA glycosylase (UDG) superfamily. UNG family.

Its subcellular location is the cytoplasm. It catalyses the reaction Hydrolyzes single-stranded DNA or mismatched double-stranded DNA and polynucleotides, releasing free uracil.. In terms of biological role, excises uracil residues from the DNA which can arise as a result of misincorporation of dUMP residues by DNA polymerase or due to deamination of cytosine. The chain is Uracil-DNA glycosylase from Borrelia turicatae (strain 91E135).